Here is a 380-residue protein sequence, read N- to C-terminus: Erythronate-4-phosphate dehydrogenase (380 aa).

Substrate contacts are provided by Ser-45 and Thr-66. NAD(+) is bound by residues 126–127, Asp-146, Thr-175, 206–208, and Asp-232; these read QV and ASR. The active site involves Arg-208. Glu-237 is an active-site residue. His-254 acts as the Proton donor in catalysis. NAD(+) is bound at residue Gly-257. Position 258 (Tyr-258) interacts with substrate.

It belongs to the D-isomer specific 2-hydroxyacid dehydrogenase family. PdxB subfamily. Homodimer.

It localises to the cytoplasm. It carries out the reaction 4-phospho-D-erythronate + NAD(+) = (R)-3-hydroxy-2-oxo-4-phosphooxybutanoate + NADH + H(+). It functions in the pathway cofactor biosynthesis; pyridoxine 5'-phosphate biosynthesis; pyridoxine 5'-phosphate from D-erythrose 4-phosphate: step 2/5. In terms of biological role, catalyzes the oxidation of erythronate-4-phosphate to 3-hydroxy-2-oxo-4-phosphonooxybutanoate. The protein is Erythronate-4-phosphate dehydrogenase of Pseudomonas paraeruginosa (strain DSM 24068 / PA7) (Pseudomonas aeruginosa (strain PA7)).